The chain runs to 100 residues: Putative protein adenylyltransferase MJ1379 (100 aa).

Residues 31–45 carry the GSX(10)DXD motif motif; that stretch reads GSYARGEQTEESDID. Mg(2+) contacts are provided by Asp-43, Asp-45, and Asp-77.

Belongs to the MntA antitoxin family. In terms of assembly, probably forms a complex with cognate toxin MJ1380. Requires Mg(2+) as cofactor.

The catalysed reaction is L-tyrosyl-[protein] + ATP = O-(5'-adenylyl)-L-tyrosyl-[protein] + diphosphate. It carries out the reaction O-(5'-adenylyl)-L-tyrosyl-[protein] + ATP = O-[5'-(adenylyl-(5'-&gt;3')-adenylyl)]-L-tyrosyl-[protein] + diphosphate. Its function is as follows. Probable antitoxin component of a putative type VII toxin-antitoxin (TA) system. Neutralizes cognate toxic MJ1380 by di-AMPylation. This is Putative protein adenylyltransferase MJ1379 from Methanocaldococcus jannaschii (strain ATCC 43067 / DSM 2661 / JAL-1 / JCM 10045 / NBRC 100440) (Methanococcus jannaschii).